The chain runs to 301 residues: N-acetylmuramic acid 6-phosphate etherase (301 aa).

In terms of domain architecture, SIS spans 57-220; that stretch reads TYEKMLFGGR…STSLMIKKGK (164 aa). Glu85 serves as the catalytic Proton donor. Residue Glu116 is part of the active site.

The protein belongs to the GCKR-like family. MurNAc-6-P etherase subfamily. As to quaternary structure, homodimer.

The enzyme catalyses N-acetyl-D-muramate 6-phosphate + H2O = N-acetyl-D-glucosamine 6-phosphate + (R)-lactate. It participates in amino-sugar metabolism; N-acetylmuramate degradation. Functionally, specifically catalyzes the cleavage of the D-lactyl ether substituent of MurNAc 6-phosphate, producing GlcNAc 6-phosphate and D-lactate. This chain is N-acetylmuramic acid 6-phosphate etherase, found in Clostridium botulinum (strain Eklund 17B / Type B).